The chain runs to 55 residues: Metallothionein-1 (55 aa).

Belongs to the metallothionein superfamily. Type 11 family.

This is Metallothionein-1 (MTP1) from Yarrowia lipolytica (strain CLIB 122 / E 150) (Yeast).